We begin with the raw amino-acid sequence, 291 residues long: Glycine--tRNA ligase alpha subunit (291 aa).

This sequence belongs to the class-II aminoacyl-tRNA synthetase family. In terms of assembly, tetramer of two alpha and two beta subunits.

It localises to the cytoplasm. The enzyme catalyses tRNA(Gly) + glycine + ATP = glycyl-tRNA(Gly) + AMP + diphosphate. The polypeptide is Glycine--tRNA ligase alpha subunit (Coprothermobacter proteolyticus (strain ATCC 35245 / DSM 5265 / OCM 4 / BT)).